We begin with the raw amino-acid sequence, 273 residues long: Light-independent protochlorophyllide reductase iron-sulfur ATP-binding protein (273 aa).

ATP-binding positions include 12 to 17 and K41; that span reads GIGKST. Position 16 (S16) interacts with Mg(2+). Residues C97 and C131 each coordinate [4Fe-4S] cluster. 182–183 provides a ligand contact to ATP; sequence NR.

It belongs to the NifH/BchL/ChlL family. Homodimer. Protochlorophyllide reductase is composed of three subunits; BchL, BchN and BchB. [4Fe-4S] cluster is required as a cofactor.

It catalyses the reaction chlorophyllide a + oxidized 2[4Fe-4S]-[ferredoxin] + 2 ADP + 2 phosphate = protochlorophyllide a + reduced 2[4Fe-4S]-[ferredoxin] + 2 ATP + 2 H2O. It functions in the pathway porphyrin-containing compound metabolism; bacteriochlorophyll biosynthesis (light-independent). Its function is as follows. Component of the dark-operative protochlorophyllide reductase (DPOR) that uses Mg-ATP and reduced ferredoxin to reduce ring D of protochlorophyllide (Pchlide) to form chlorophyllide a (Chlide). This reaction is light-independent. The L component serves as a unique electron donor to the NB-component of the complex, and binds Mg-ATP. The protein is Light-independent protochlorophyllide reductase iron-sulfur ATP-binding protein of Roseiflexus castenholzii (strain DSM 13941 / HLO8).